We begin with the raw amino-acid sequence, 174 residues long: Crossover junction endodeoxyribonuclease RuvC (174 aa).

Active-site residues include D8, E67, and D139. Mg(2+) is bound by residues D8, E67, and D139.

It belongs to the RuvC family. Homodimer which binds Holliday junction (HJ) DNA. The HJ becomes 2-fold symmetrical on binding to RuvC with unstacked arms; it has a different conformation from HJ DNA in complex with RuvA. In the full resolvosome a probable DNA-RuvA(4)-RuvB(12)-RuvC(2) complex forms which resolves the HJ. The cofactor is Mg(2+).

It is found in the cytoplasm. It catalyses the reaction Endonucleolytic cleavage at a junction such as a reciprocal single-stranded crossover between two homologous DNA duplexes (Holliday junction).. Its function is as follows. The RuvA-RuvB-RuvC complex processes Holliday junction (HJ) DNA during genetic recombination and DNA repair. Endonuclease that resolves HJ intermediates. Cleaves cruciform DNA by making single-stranded nicks across the HJ at symmetrical positions within the homologous arms, yielding a 5'-phosphate and a 3'-hydroxyl group; requires a central core of homology in the junction. The consensus cleavage sequence is 5'-(A/T)TT(C/G)-3'. Cleavage occurs on the 3'-side of the TT dinucleotide at the point of strand exchange. HJ branch migration catalyzed by RuvA-RuvB allows RuvC to scan DNA until it finds its consensus sequence, where it cleaves and resolves the cruciform DNA. In Pseudomonas putida (strain ATCC 47054 / DSM 6125 / CFBP 8728 / NCIMB 11950 / KT2440), this protein is Crossover junction endodeoxyribonuclease RuvC.